The primary structure comprises 491 residues: Aspartyl/glutamyl-tRNA(Asn/Gln) amidotransferase subunit B (491 aa).

The protein belongs to the GatB/GatE family. GatB subfamily. Heterotrimer of A, B and C subunits.

The catalysed reaction is L-glutamyl-tRNA(Gln) + L-glutamine + ATP + H2O = L-glutaminyl-tRNA(Gln) + L-glutamate + ADP + phosphate + H(+). The enzyme catalyses L-aspartyl-tRNA(Asn) + L-glutamine + ATP + H2O = L-asparaginyl-tRNA(Asn) + L-glutamate + ADP + phosphate + 2 H(+). Its function is as follows. Allows the formation of correctly charged Asn-tRNA(Asn) or Gln-tRNA(Gln) through the transamidation of misacylated Asp-tRNA(Asn) or Glu-tRNA(Gln) in organisms which lack either or both of asparaginyl-tRNA or glutaminyl-tRNA synthetases. The reaction takes place in the presence of glutamine and ATP through an activated phospho-Asp-tRNA(Asn) or phospho-Glu-tRNA(Gln). The polypeptide is Aspartyl/glutamyl-tRNA(Asn/Gln) amidotransferase subunit B (Burkholderia ambifaria (strain ATCC BAA-244 / DSM 16087 / CCUG 44356 / LMG 19182 / AMMD) (Burkholderia cepacia (strain AMMD))).